Here is a 276-residue protein sequence, read N- to C-terminus: Secreted RxLR effector protein 85 (276 aa).

The first 27 residues, 1–27 (MRYCAFRLGLFFIGYSCCVLLSTPTLA), serve as a signal peptide directing secretion. The RxLR motif lies at 110-113 (RQLR).

Belongs to the RxLR effector family.

It localises to the secreted. The protein localises to the host cell membrane. Secreted effector that partially suppresses the host cell death induced by cell death-inducing proteins. The polypeptide is Secreted RxLR effector protein 85 (Plasmopara viticola (Downy mildew of grapevine)).